Reading from the N-terminus, the 1117-residue chain is Protein rliB (1117 aa).

The first 23 residues, 1–23 (MKNINNKILKIFILFLAICSVKS), serve as a signal peptide directing secretion. N-linked (GlcNAc...) asparagine glycans are attached at residues N136, N195, N279, and N318. The region spanning 266-392 (STWSNNLVPQ…YHNSWTKLAS (127 aa)) is the G8 domain. 2 PbH1 repeats span residues 522–544 (VQKSYISDCVVTKSYYRCYTIHG) and 545–567 (TNNLTLTRNVAFDVNGHCYYLED). N-linked (GlcNAc...) asparagine glycosylation is found at N547 and N605. A PbH1 3 repeat occupies 621 to 642 (NAYNTIIGNSASGGWAGFSFPN). Residues N728, N845, N1030, N1044, N1091, and N1107 are each glycosylated (N-linked (GlcNAc...) asparagine).

The protein belongs to the comF family.

It is found in the secreted. This is Protein rliB (rliB) from Dictyostelium discoideum (Social amoeba).